The chain runs to 362 residues: Biotin synthase (362 aa).

The Radical SAM core domain maps to 46-273 (NEVQVSTLLS…ASHVRLSAGR (228 aa)). [4Fe-4S] cluster contacts are provided by C61, C65, and C68. [2Fe-2S] cluster contacts are provided by C105, C136, C196, and R268.

This sequence belongs to the radical SAM superfamily. Biotin synthase family. As to quaternary structure, homodimer. It depends on [4Fe-4S] cluster as a cofactor. Requires [2Fe-2S] cluster as cofactor.

The enzyme catalyses (4R,5S)-dethiobiotin + (sulfur carrier)-SH + 2 reduced [2Fe-2S]-[ferredoxin] + 2 S-adenosyl-L-methionine = (sulfur carrier)-H + biotin + 2 5'-deoxyadenosine + 2 L-methionine + 2 oxidized [2Fe-2S]-[ferredoxin]. It participates in cofactor biosynthesis; biotin biosynthesis; biotin from 7,8-diaminononanoate: step 2/2. Catalyzes the conversion of dethiobiotin (DTB) to biotin by the insertion of a sulfur atom into dethiobiotin via a radical-based mechanism. The chain is Biotin synthase from Aeromonas salmonicida (strain A449).